Here is an 821-residue protein sequence, read N- to C-terminus: LPS-assembly protein LptD (821 aa).

The signal sequence occupies residues 1–20 (MGKRLFWTALSGLMVSAAHA).

Belongs to the LptD family. As to quaternary structure, component of the lipopolysaccharide transport and assembly complex. Interacts with LptE and LptA.

It is found in the cell outer membrane. Functionally, together with LptE, is involved in the assembly of lipopolysaccharide (LPS) at the surface of the outer membrane. This chain is LPS-assembly protein LptD, found in Chromohalobacter salexigens (strain ATCC BAA-138 / DSM 3043 / CIP 106854 / NCIMB 13768 / 1H11).